An 814-amino-acid polypeptide reads, in one-letter code: MTSSARNGSPSPSPALPSTTTPAEQESRNTMTTANNPGDWDSSESRPQPLSNGKGVGNGMVANGHQRPSTSSTAASANNASAKDPLRPRRKKAKRACFACQRAHLTCGDERPCQRCIKRGLQDTCHDGVRKKAKYLHDAPNEALIPGIRGNLYSQAQAARNKINTNSQQRNGTNSNSDNNSTNTNSNNKPSHQDVSTNFFSTPSTNNYNTVYTQAKSRQSQHMPSRVMQDATMNPSAFQAQPPASPTFDLSSNPQNHTLSPSMAQNSGTTPSSSASQNPDPYGPTFFDPSHPALFNFDIASMNFGNRYGALEFGMLGHLATGAGDTPPSDSATRRGSIGRSSGTFTVQNFGEGSSNQSPFLFGGDPVLNDWNPAGQGQTNSRNIYNQNSVSGQMADHPHAFAIESAPMNFASPSSTESPQMTTVTQFDDPSVNFSSRTTLMPPTNTQHQQQPQPPRISTPSLKNMQVGVKRRYRSPSSIYESVKEPYSYTSGFHSLTAFIQRRFSPQKTLQIAKALASIRPSFIATTKTLNQDDLIFMEKCFQRTLWEYEDFIDACGTPTIVCRRTGEIAAVGKEFSILTGWKKEVLLGKEPNLNVNTGGSSSSGVSSRGSSTYNSRNSATMTVMDNQSLPTGRTQPVFLAELLDDDSVIEFYEDFAKLAFGDSRGSVMTTCKLLKYKTKEDGVGLFRNSNGEVSAAGGGGTAADDTDANDGAGAGAGDGTTSAVNGVSNGSGNNATNVNANGNVNVIPNDLSGASSMKLSPKQAWGKSRIAGEAGMNQLGFRDGKVECSYCWTVKRDVFDIPMLIVMNFLPCI.

The interval methionine 1 to arginine 90 is disordered. Over residues serine 69 to lysine 83 the composition is skewed to low complexity. Residues cysteine 97–cysteine 125 constitute a DNA-binding region (zn(2)-C6 fungal-type). Disordered stretches follow at residues asparagine 164–tyrosine 208, serine 236–phenylalanine 287, alanine 323–isoleucine 384, proline 442–serine 461, threonine 598–arginine 617, and serine 695–valine 739. The span at asparagine 171–asparagine 188 shows a compositional bias: low complexity. 4 stretches are compositionally biased toward polar residues: residues lysine 189–tyrosine 208, phenylalanine 248–proline 279, glycine 339–proline 359, and glycine 375–isoleucine 384. A compositionally biased stretch (low complexity) spans proline 442–glutamine 451. Residues glycine 720 to valine 739 are compositionally biased toward low complexity.

This sequence belongs to the ERT1/acuK family.

It is found in the nucleus. In terms of biological role, transcription factor which regulates nonfermentable carbon utilization. Activator of gluconeogenetic genes. The protein is Transcription activator of gluconeogenesis PADG_03802 of Paracoccidioides brasiliensis (strain Pb18).